Reading from the N-terminus, the 46-residue chain is Large ribosomal subunit protein bL36B (46 aa).

It belongs to the bacterial ribosomal protein bL36 family.

The polypeptide is Large ribosomal subunit protein bL36B (Cronobacter sakazakii (strain ATCC BAA-894) (Enterobacter sakazakii)).